Reading from the N-terminus, the 131-residue chain is UPF0212 protein TK1194 (131 aa).

The protein belongs to the UPF0212 family.

This chain is UPF0212 protein TK1194, found in Thermococcus kodakarensis (strain ATCC BAA-918 / JCM 12380 / KOD1) (Pyrococcus kodakaraensis (strain KOD1)).